The sequence spans 139 residues: Phosphoribosyl-AMP cyclohydrolase (139 aa).

Asp91 contacts Mg(2+). Residue Cys92 coordinates Zn(2+). Asp93 and Asp95 together coordinate Mg(2+). Residues Cys110 and Cys117 each contribute to the Zn(2+) site.

It belongs to the PRA-CH family. In terms of assembly, homodimer. Mg(2+) serves as cofactor. The cofactor is Zn(2+).

It localises to the cytoplasm. It carries out the reaction 1-(5-phospho-beta-D-ribosyl)-5'-AMP + H2O = 1-(5-phospho-beta-D-ribosyl)-5-[(5-phospho-beta-D-ribosylamino)methylideneamino]imidazole-4-carboxamide. It functions in the pathway amino-acid biosynthesis; L-histidine biosynthesis; L-histidine from 5-phospho-alpha-D-ribose 1-diphosphate: step 3/9. Its function is as follows. Catalyzes the hydrolysis of the adenine ring of phosphoribosyl-AMP. The polypeptide is Phosphoribosyl-AMP cyclohydrolase (Brucella canis (strain ATCC 23365 / NCTC 10854 / RM-666)).